We begin with the raw amino-acid sequence, 342 residues long: Holliday junction branch migration complex subunit RuvB (342 aa).

Positions 1-182 (MRIEALNTAP…FGINSRLDYY (182 aa)) are large ATPase domain (RuvB-L). ATP-binding positions include Ile21, Arg22, Gly63, Lys66, Thr67, Thr68, 129-131 (EDY), Arg172, Tyr182, and Arg219. Thr67 contributes to the Mg(2+) binding site. The small ATPAse domain (RuvB-S) stretch occupies residues 183 to 253 (SPELLQSIIV…VARRTLESLE (71 aa)). The tract at residues 256–342 (EGGLDDMDKK…DHGPLFDHNS (87 aa)) is head domain (RuvB-H). Residues Arg311 and Arg316 each coordinate DNA.

Belongs to the RuvB family. Homohexamer. Forms an RuvA(8)-RuvB(12)-Holliday junction (HJ) complex. HJ DNA is sandwiched between 2 RuvA tetramers; dsDNA enters through RuvA and exits via RuvB. An RuvB hexamer assembles on each DNA strand where it exits the tetramer. Each RuvB hexamer is contacted by two RuvA subunits (via domain III) on 2 adjacent RuvB subunits; this complex drives branch migration. In the full resolvosome a probable DNA-RuvA(4)-RuvB(12)-RuvC(2) complex forms which resolves the HJ.

It is found in the cytoplasm. It catalyses the reaction ATP + H2O = ADP + phosphate + H(+). Functionally, the RuvA-RuvB-RuvC complex processes Holliday junction (HJ) DNA during genetic recombination and DNA repair, while the RuvA-RuvB complex plays an important role in the rescue of blocked DNA replication forks via replication fork reversal (RFR). RuvA specifically binds to HJ cruciform DNA, conferring on it an open structure. The RuvB hexamer acts as an ATP-dependent pump, pulling dsDNA into and through the RuvAB complex. RuvB forms 2 homohexamers on either side of HJ DNA bound by 1 or 2 RuvA tetramers; 4 subunits per hexamer contact DNA at a time. Coordinated motions by a converter formed by DNA-disengaged RuvB subunits stimulates ATP hydrolysis and nucleotide exchange. Immobilization of the converter enables RuvB to convert the ATP-contained energy into a lever motion, pulling 2 nucleotides of DNA out of the RuvA tetramer per ATP hydrolyzed, thus driving DNA branch migration. The RuvB motors rotate together with the DNA substrate, which together with the progressing nucleotide cycle form the mechanistic basis for DNA recombination by continuous HJ branch migration. Branch migration allows RuvC to scan DNA until it finds its consensus sequence, where it cleaves and resolves cruciform DNA. This Chlorobaculum parvum (strain DSM 263 / NCIMB 8327) (Chlorobium vibrioforme subsp. thiosulfatophilum) protein is Holliday junction branch migration complex subunit RuvB.